Consider the following 465-residue polypeptide: UDP-N-acetylmuramate--L-alanine ligase (465 aa).

Residue 112 to 118 coordinates ATP; sequence GTHGKTT.

The protein belongs to the MurCDEF family.

The protein localises to the cytoplasm. It carries out the reaction UDP-N-acetyl-alpha-D-muramate + L-alanine + ATP = UDP-N-acetyl-alpha-D-muramoyl-L-alanine + ADP + phosphate + H(+). The protein operates within cell wall biogenesis; peptidoglycan biosynthesis. In terms of biological role, cell wall formation. In Burkholderia vietnamiensis (strain G4 / LMG 22486) (Burkholderia cepacia (strain R1808)), this protein is UDP-N-acetylmuramate--L-alanine ligase.